The following is a 370-amino-acid chain: Dual-specificity RNA methyltransferase RlmN (370 aa).

The Proton acceptor role is filled by Glu93. One can recognise a Radical SAM core domain in the interval 99 to 331 (DRKRGTLCVS…TRVRRTRGDD (233 aa)). Cys106 and Cys336 are disulfide-bonded. Positions 113, 117, and 120 each coordinate [4Fe-4S] cluster. S-adenosyl-L-methionine is bound by residues 162–163 (GE), Ser194, 216–218 (SLH), and Asn293. The S-methylcysteine intermediate role is filled by Cys336.

Belongs to the radical SAM superfamily. RlmN family. The cofactor is [4Fe-4S] cluster.

The protein localises to the cytoplasm. It catalyses the reaction adenosine(2503) in 23S rRNA + 2 reduced [2Fe-2S]-[ferredoxin] + 2 S-adenosyl-L-methionine = 2-methyladenosine(2503) in 23S rRNA + 5'-deoxyadenosine + L-methionine + 2 oxidized [2Fe-2S]-[ferredoxin] + S-adenosyl-L-homocysteine. It carries out the reaction adenosine(37) in tRNA + 2 reduced [2Fe-2S]-[ferredoxin] + 2 S-adenosyl-L-methionine = 2-methyladenosine(37) in tRNA + 5'-deoxyadenosine + L-methionine + 2 oxidized [2Fe-2S]-[ferredoxin] + S-adenosyl-L-homocysteine. In terms of biological role, specifically methylates position 2 of adenine 2503 in 23S rRNA and position 2 of adenine 37 in tRNAs. m2A2503 modification seems to play a crucial role in the proofreading step occurring at the peptidyl transferase center and thus would serve to optimize ribosomal fidelity. This Coxiella burnetii (strain RSA 493 / Nine Mile phase I) protein is Dual-specificity RNA methyltransferase RlmN.